Here is a 758-residue protein sequence, read N- to C-terminus: Thiosulfate reductase molybdopterin-containing subunit PhsA (758 aa).

Positions 1–30 (MSISRRSFLQGVGIGCSACALGAFPPGALA) form a signal peptide, tat-type signal. One can recognise a 4Fe-4S Mo/W bis-MGD-type domain in the interval 41 to 97 (TTLTPSLCEMCSFRCPIQAQVVNNKTVFIQGNPSAPQQGTRICARGGSGVSLVNDPQ). 4 residues coordinate [4Fe-4S] cluster: cysteine 48, cysteine 51, cysteine 55, and cysteine 83.

This sequence belongs to the prokaryotic molybdopterin-containing oxidoreductase family. Composed of three subunits: PhsA, PhsB and PhsC. [4Fe-4S] cluster serves as cofactor. It depends on Mo-bis(molybdopterin guanine dinucleotide) as a cofactor. Post-translationally, predicted to be exported by the Tat system. The position of the signal peptide cleavage has not been experimentally proven.

The protein resides in the periplasm. The catalysed reaction is a quinone + hydrogen sulfide + sulfite + 2 H(+) = thiosulfate + a quinol. Component of the PhsABC thiosulfate reductase that catalyzes the reduction of thiosulfate to sulfite and hydrogen sulfide, with menaquinol as the sole electron donor. Proton motive force (PMF) is required to drive transmembrane electron transfer within the reductase. The PhsA subunit contains the active site molybdenum-bis(molybdopterin guanine dinucleotide) (Mo-bis-MGD) cofactor. This Salmonella typhimurium (strain LT2 / SGSC1412 / ATCC 700720) protein is Thiosulfate reductase molybdopterin-containing subunit PhsA.